Reading from the N-terminus, the 193-residue chain is Ribonuclease HII (193 aa).

In terms of domain architecture, RNase H type-2 spans 3–192 (SLVAGIDEVG…VRAVIDRSSA (190 aa)). Residues D9, E10, and D101 each coordinate a divalent metal cation.

Belongs to the RNase HII family. Mn(2+) serves as cofactor. The cofactor is Mg(2+).

Its subcellular location is the cytoplasm. The enzyme catalyses Endonucleolytic cleavage to 5'-phosphomonoester.. In terms of biological role, endonuclease that specifically degrades the RNA of RNA-DNA hybrids. The chain is Ribonuclease HII from Methylococcus capsulatus (strain ATCC 33009 / NCIMB 11132 / Bath).